Here is a 156-residue protein sequence, read N- to C-terminus: Gamma-L-glutamyl-butirosin B gamma-glutamyl cyclotransferase (156 aa).

24–27 (YGTL) is a binding site for substrate. Glutamate 89 serves as the catalytic Proton acceptor.

The protein belongs to the gamma-glutamylcyclotransferase family.

The catalysed reaction is gamma-L-glutamyl-butirosin B = butirosin B + 5-oxo-L-proline. It participates in antibiotic biosynthesis; butirosin biosynthesis. Functionally, cyclotransferase that catalyzes the last step in the biosynthesis of the aminoglycoside antibiotic butirosin B. Cleaves the amide bond via transamidation using the alpha-amine of the terminal gamma-L-glutamate of the side chain, releasing it as the cyclic 5-oxoproline. This is Gamma-L-glutamyl-butirosin B gamma-glutamyl cyclotransferase (btrG) from Niallia circulans (Bacillus circulans).